The sequence spans 287 residues: Phospholipase A and acyltransferase 5 (287 aa).

Disordered regions lie at residues 48–72 and 86–138; these read PKQI…ASSQ and DRGL…SNQK. Composition is skewed to polar residues over residues 49–72 and 128–138; these read KQIS…ASSQ and LKNQAAESNQK. One can recognise an LRAT domain in the interval 144-257; that stretch reads LIEIFRIGYE…LRYGVPRSQQ (114 aa). Catalysis depends on residues His-154 and His-166. Residue Cys-241 is the Acyl-thioester intermediate of the active site.

It belongs to the H-rev107 family. As to expression, expressed in testis.

The protein localises to the cytoplasm. It localises to the cytosol. It carries out the reaction a 1,2-diacyl-sn-glycero-3-phosphocholine + H2O = a 1-acyl-sn-glycero-3-phosphocholine + a fatty acid + H(+). The enzyme catalyses a 1,2-diacyl-sn-glycero-3-phosphocholine + H2O = a 2-acyl-sn-glycero-3-phosphocholine + a fatty acid + H(+). The catalysed reaction is 1-hexadecanoyl-2-(5Z,8Z,11Z,14Z-eicosatetraenoyl)-sn-glycero-3-phosphocholine + 1,2-di-(9Z-octadecenoyl)-sn-glycero-3-phosphoethanolamine = N-(5Z,8Z,11Z,14Z-eicosatetraenoyl)-1,2-di-(9Z-octadecenoyl)-sn-glycero-3-phosphoethanolamine + 1-hexadecanoyl-sn-glycero-3-phosphocholine + H(+). It catalyses the reaction 1,2-di-(9Z-octadecenoyl)-sn-glycero-3-phosphoethanolamine + 1,2-dihexadecanoyl-sn-glycero-3-phosphocholine = N-hexadecanoyl-1,2-di-(9Z-octadecenoyl)-sn-glycero-3-phosphoethanolamine + 1-hexadecanoyl-sn-glycero-3-phosphocholine + H(+). It carries out the reaction 1,2-di-(9Z-octadecenoyl)-sn-glycero-3-phosphoethanolamine + 1,2-dihexadecanoyl-sn-glycero-3-phosphocholine = N-hexadecanoyl-1,2-di-(9Z-octadecenoyl)-sn-glycero-3-phosphoethanolamine + 2-hexadecanoyl-sn-glycero-3-phosphocholine + H(+). The enzyme catalyses a 1,2-diacyl-sn-glycero-3-phosphoethanolamine + a 1,2-diacyl-sn-glycero-3-phosphocholine = an N-acyl-1,2-diacyl-sn-glycero-3-phosphoethanolamine + a 1-acyl-sn-glycero-3-phosphocholine + H(+). The catalysed reaction is a 1,2-diacyl-sn-glycero-3-phosphoethanolamine + a 1,2-diacyl-sn-glycero-3-phosphocholine = an N-acyl-1,2-diacyl-sn-glycero-3-phosphoethanolamine + a 2-acyl-sn-glycero-3-phosphocholine + H(+). It catalyses the reaction 1-hexadecanoyl-2-(9Z-octadecenoyl)-sn-glycero-3-phosphocholine + 1,2-di-(9Z-octadecenoyl)-sn-glycero-3-phosphoethanolamine = N,1,2-tri-(9Z-octadecenoyl)-sn-glycero-3-phosphoethanolamine + 1-hexadecanoyl-sn-glycero-3-phosphocholine + H(+). Its function is as follows. Exhibits both phospholipase A1/2 and acyltransferase activities. Shows phospholipase A1 (PLA1) and A2 (PLA2) activity, catalyzing the calcium-independent release of fatty acids from the sn-1 or sn-2 position of glycerophospholipids. Shows N-acyltransferase activity, catalyzing the calcium-independent transfer of a fatty acyl group at the sn-1 position of phosphatidylcholine (PC) and other glycerophospholipids to the primary amine of phosphatidylethanolamine (PE), forming N-acylphosphatidylethanolamine (NAPE), which serves as precursor for N-acylethanolamines (NAEs). The sequence is that of Phospholipase A and acyltransferase 5 from Rattus norvegicus (Rat).